A 484-amino-acid chain; its full sequence is MVTKTLSVLFVASEVEGLIKSGGLADVAKALPKALQTLEQDVRVTIPAYRNIPNIDSAEVILSTELDHWPHTAYQVKKLSVEGVQIFAIECAKYFDRPEMYAENNQAYADNGERFSFFSTACLDMLPKLAFQPDIIHANDWHTGFVPFLLKSRYQQHDFFENTRSVISIHNAVFKGVFAYDELQCLSEMHSYNVPEASVSDTHVTMLKAGVMCADKINAVSPTYAEELKTELGSHGMAAEFQHRSADLFGILNGCDYGAWNPETDAFLPRKFKATKHSMTRGKSACKQKLQQDVGLPVTDCAVYGMVCRLTNQKGVHYLLPIIEQFLKNELQIVIVGTGDPVLASQLKELSALHSDKFSFVEAYNNELAHLVEAGSDFFLMPSEFEPCGLNQIYSMAYGTLPIVRSVGGLKDSVNDYDQEPEIATGFAFEEPTPQALLAVLHRSLLLYAQNPSEIKRVQLYAMQQDFSWEDAAEEYLAMYHSAF.

Residue Lys-20 participates in ADP-alpha-D-glucose binding.

Belongs to the glycosyltransferase 1 family. Bacterial/plant glycogen synthase subfamily.

It catalyses the reaction [(1-&gt;4)-alpha-D-glucosyl](n) + ADP-alpha-D-glucose = [(1-&gt;4)-alpha-D-glucosyl](n+1) + ADP + H(+). Its pathway is glycan biosynthesis; glycogen biosynthesis. Functionally, synthesizes alpha-1,4-glucan chains using ADP-glucose. This is Glycogen synthase from Vibrio atlanticus (strain LGP32) (Vibrio splendidus (strain Mel32)).